Consider the following 260-residue polypeptide: MQAARGGAGRPERPGRPGRGPERERERPPGAGAASPCAAPGLPAGGATIHPGSPSAWPPRARAALRLWLGCVCFALVQADSPSAPVNVTVRHLKANSAVVSWDVLEDEVVIGFAISQQKKDVRMLRFIQEVNTTTRSCALWDLEEDTEYIVHVQAISIQGQSPASEPVLFKTPREAEKMASKNKDEVTMKEMGRNQQLRTGEVLIIVVVLFMWAGVIALFCRQYDIIKDNEPNNNKEKTKSASETSTPEHQGGGLLRSKI.

The disordered stretch occupies residues 1–56 (MQAARGGAGRPERPGRPGRGPERERERPPGAGAASPCAAPGLPAGGATIHPGSPSA). The segment covering 10–28 (RPERPGRPGRGPERERERP) has biased composition (basic and acidic residues). A compositionally biased stretch (low complexity) spans 29-56 (PGAGAASPCAAPGLPAGGATIHPGSPSA). The Fibronectin type-III domain occupies 84-175 (APVNVTVRHL…EPVLFKTPRE (92 aa)). 2 N-linked (GlcNAc...) asparagine glycosylation sites follow: Asn-87 and Asn-132. The chain crosses the membrane as a helical span at residues 201–221 (GEVLIIVVVLFMWAGVIALFC). Residues 230–241 (NEPNNNKEKTKS) show a composition bias toward basic and acidic residues. The segment at 230-260 (NEPNNNKEKTKSASETSTPEHQGGGLLRSKI) is disordered. Residues 251-260 (QGGGLLRSKI) show a composition bias toward gly residues. The Microbody targeting signal signature appears at 258–260 (SKI).

Dimer; may exist in other oligomeric forms. In terms of processing, the extracellular domain is cleaved and released from the cell membrane. N-Glycosylated. As to expression, widely expressed, with highest levels in heart. Very low expression, if any, in colon, pancreas and spleen.

It is found in the cell membrane. Its subcellular location is the peroxisome membrane. The protein localises to the secreted. Functionally, mediates beneficial effects of muscular exercise. Induces browning of white adipose tissue by stimulating UCP1 expression, at least in part, via the nuclear receptor PPARA. The chain is Fibronectin type III domain-containing protein 5 (FNDC5) from Homo sapiens (Human).